The primary structure comprises 629 residues: RNA polymerase sigma factor RpoD (629 aa).

Positions 183 to 228 (HNGLDEDFSDEDDEEESSNADVEDNEDEEDNESESTSDSSDSDNSI) are disordered. Acidic residues predominate over residues 187-228 (DEDFSDEDDEEESSNADVEDNEDEEDNESESTSDSSDSDNSI). Residues 395 to 465 (MVEANLRLVI…TRSIADQART (71 aa)) are sigma-70 factor domain-2. An Interaction with polymerase core subunit RpoC motif is present at residues 419–422 (DLIQ). The segment at 474–550 (ETINKLNRIS…DSTLELPLDS (77 aa)) is sigma-70 factor domain-3. The segment at 563–616 (VLEGLTPREAKVLRMRFGIDMNTDHTLEEVGKQFDVTRERIRQIEAKALRKLRH) is sigma-70 factor domain-4. A DNA-binding region (H-T-H motif) is located at residues 589–608 (LEEVGKQFDVTRERIRQIEA).

This sequence belongs to the sigma-70 factor family. RpoD/SigA subfamily. As to quaternary structure, interacts transiently with the RNA polymerase catalytic core.

It is found in the cytoplasm. Functionally, sigma factors are initiation factors that promote the attachment of RNA polymerase to specific initiation sites and are then released. This sigma factor is the primary sigma factor during exponential growth. In Haemophilus influenzae (strain ATCC 51907 / DSM 11121 / KW20 / Rd), this protein is RNA polymerase sigma factor RpoD.